A 322-amino-acid chain; its full sequence is NADH-quinone oxidoreductase subunit H (322 aa).

Helical transmembrane passes span 12 to 32 (IGKA…MSFI), 79 to 99 (IFVL…AVVP), 111 to 131 (VGLL…LFAG), 151 to 171 (LSYE…TGSF), 183 to 203 (LWNV…GVAV), 234 to 254 (FFVG…TLFF), 262 to 282 (LPPF…FILL), and 301 to 321 (VCLP…LMNA).

The protein belongs to the complex I subunit 1 family. As to quaternary structure, NDH-1 is composed of 14 different subunits. Subunits NuoA, H, J, K, L, M, N constitute the membrane sector of the complex.

It localises to the cell inner membrane. The catalysed reaction is a quinone + NADH + 5 H(+)(in) = a quinol + NAD(+) + 4 H(+)(out). NDH-1 shuttles electrons from NADH, via FMN and iron-sulfur (Fe-S) centers, to quinones in the respiratory chain. The immediate electron acceptor for the enzyme in this species is believed to be ubiquinone. Couples the redox reaction to proton translocation (for every two electrons transferred, four hydrogen ions are translocated across the cytoplasmic membrane), and thus conserves the redox energy in a proton gradient. This subunit may bind ubiquinone. The polypeptide is NADH-quinone oxidoreductase subunit H (Aeromonas hydrophila subsp. hydrophila (strain ATCC 7966 / DSM 30187 / BCRC 13018 / CCUG 14551 / JCM 1027 / KCTC 2358 / NCIMB 9240 / NCTC 8049)).